A 309-amino-acid polypeptide reads, in one-letter code: MKIAVLMGGPSSEREISLKSGSAVAAALSGLGHQVITIDLNREVVARLKNFAPDVVFNALHGKPGEDGSVQGLLEVLGLPYTGSRVLASAITMDKIMTKRVLLQAGIPTPKFLAWTGAEYATGKKEIKAAILKELGLPVVIKAPTQGSTIGTFIVREEGELEPAIAGALKYDLSFMAEAYLAGPEITAAVLGNRKPQVLPLIEIVSHTGFYDYQAKYTPGLSDHIIPPRLPDDVLAAATSLAGRTYALLGCRGFARVDFIVAGGREPQVIEVNSVPGMTATSLVPDAARAAGLDFPDLVQKIVDLALEP.

Positions 99–304 (KRVLLQAGIP…FPDLVQKIVD (206 aa)) constitute an ATP-grasp domain. ATP is bound at residue 132–187 (LKELGLPVVIKAPTQGSTIGTFIVREEGELEPAIAGALKYDLSFMAEAYLAGPEIT). D258, E271, and N273 together coordinate Mg(2+).

The protein belongs to the D-alanine--D-alanine ligase family. Mg(2+) serves as cofactor. Mn(2+) is required as a cofactor.

It is found in the cytoplasm. The catalysed reaction is 2 D-alanine + ATP = D-alanyl-D-alanine + ADP + phosphate + H(+). It functions in the pathway cell wall biogenesis; peptidoglycan biosynthesis. In terms of biological role, cell wall formation. The protein is D-alanine--D-alanine ligase of Moorella thermoacetica (strain ATCC 39073 / JCM 9320).